The sequence spans 283 residues: Pantothenate synthetase (283 aa).

30–37 (MGNLHSGH) lines the ATP pocket. The active-site Proton donor is the H37. Q61 lines the (R)-pantoate pocket. Residue Q61 participates in beta-alanine binding. 149 to 152 (GQKD) lines the ATP pocket. Position 155 (Q155) interacts with (R)-pantoate. ATP-binding positions include V178 and 186–189 (LSSR).

The protein belongs to the pantothenate synthetase family. As to quaternary structure, homodimer.

It localises to the cytoplasm. The catalysed reaction is (R)-pantoate + beta-alanine + ATP = (R)-pantothenate + AMP + diphosphate + H(+). Its pathway is cofactor biosynthesis; (R)-pantothenate biosynthesis; (R)-pantothenate from (R)-pantoate and beta-alanine: step 1/1. Functionally, catalyzes the condensation of pantoate with beta-alanine in an ATP-dependent reaction via a pantoyl-adenylate intermediate. This Pseudomonas fluorescens (strain SBW25) protein is Pantothenate synthetase.